A 389-amino-acid polypeptide reads, in one-letter code: Galactose-1-phosphate uridylyltransferase (389 aa).

The protein belongs to the galactose-1-phosphate uridylyltransferase type 2 family.

The protein localises to the cytoplasm. It carries out the reaction alpha-D-galactose 1-phosphate + UDP-alpha-D-glucose = alpha-D-glucose 1-phosphate + UDP-alpha-D-galactose. The protein operates within carbohydrate metabolism; galactose metabolism. The polypeptide is Galactose-1-phosphate uridylyltransferase (galT) (Butyrivibrio fibrisolvens).